The following is a 386-amino-acid chain: Zinc finger CCCH domain-containing protein 2 (386 aa).

2 consecutive C3H1-type zinc fingers follow at residues 116–143 and 151–175; these read HYSGTACPDFRKGGCKRGDACEYAHGVF and RYRTQPCKDGTACRRRVCFFAHTPD. 2 disordered regions span residues 180–200 and 220–252; these read LPAQQSSPRSVASSPLAESYD and SSPTSTLMSPPKSPPSESPPLSPDGAAAIRRGS. The segment covering 182–192 has biased composition (polar residues); it reads AQQSSPRSVAS. Positions 220-229 are enriched in low complexity; the sequence is SSPTSTLMSP. Over residues 230 to 241 the composition is skewed to pro residues; that stretch reads PKSPPSESPPLS.

The protein localises to the nucleus. Its function is as follows. Involved in leaf senescence delay. May repress jasmonic acid (JA) signaling role in promoting leaf senescence. May regulate panicle development and pollination/fertilization process. This chain is Zinc finger CCCH domain-containing protein 2, found in Oryza sativa subsp. japonica (Rice).